We begin with the raw amino-acid sequence, 602 residues long: Auxin response factor 18 (602 aa).

The segment at residues 128–230 is a DNA-binding region (TF-B3); the sequence is FVKILTASDT…DLRVGVRRLA (103 aa). Residues 359 to 396 form a disordered region; the sequence is TSPISTPAQQPQSKCKRSRPIEPSVKTPAPPSFLYSLP. The span at 360-371 shows a compositional bias: polar residues; it reads SPISTPAQQPQS. Residues 489-581 enclose the PB1 domain; it reads RSRTKVQMQG…EVKKMTTKLK (93 aa).

It belongs to the ARF family. As to quaternary structure, homodimers and heterodimers.

The protein localises to the nucleus. In terms of biological role, auxin response factors (ARFs) are transcriptional factors that bind specifically to the DNA sequence 5'-TGTCTC-3' found in the auxin-responsive promoter elements (AuxREs). Could act as transcriptional activator or repressor. Formation of heterodimers with Aux/IAA proteins may alter their ability to modulate early auxin response genes expression. This Arabidopsis thaliana (Mouse-ear cress) protein is Auxin response factor 18 (ARF18).